Consider the following 260-residue polypeptide: Ubiquinone/menaquinone biosynthesis C-methyltransferase UbiE (260 aa).

Residues threonine 83, aspartate 104, and 132–133 contribute to the S-adenosyl-L-methionine site; that span reads NA.

This sequence belongs to the class I-like SAM-binding methyltransferase superfamily. MenG/UbiE family.

The enzyme catalyses a 2-demethylmenaquinol + S-adenosyl-L-methionine = a menaquinol + S-adenosyl-L-homocysteine + H(+). It catalyses the reaction a 2-methoxy-6-(all-trans-polyprenyl)benzene-1,4-diol + S-adenosyl-L-methionine = a 5-methoxy-2-methyl-3-(all-trans-polyprenyl)benzene-1,4-diol + S-adenosyl-L-homocysteine + H(+). The protein operates within quinol/quinone metabolism; menaquinone biosynthesis; menaquinol from 1,4-dihydroxy-2-naphthoate: step 2/2. It functions in the pathway cofactor biosynthesis; ubiquinone biosynthesis. Functionally, methyltransferase required for the conversion of demethylmenaquinol (DMKH2) to menaquinol (MKH2) and the conversion of 2-polyprenyl-6-methoxy-1,4-benzoquinol (DDMQH2) to 2-polyprenyl-3-methyl-6-methoxy-1,4-benzoquinol (DMQH2). In Bartonella bacilliformis (strain ATCC 35685 / KC583 / Herrer 020/F12,63), this protein is Ubiquinone/menaquinone biosynthesis C-methyltransferase UbiE.